A 399-amino-acid polypeptide reads, in one-letter code: Argininosuccinate synthase (399 aa).

8–16 (AYSGGLDTS) lines the ATP pocket. Tyrosine 87 contributes to the L-citrulline binding site. Position 117 (glycine 117) interacts with ATP. L-aspartate-binding residues include threonine 119, asparagine 123, and aspartate 124. L-citrulline is bound at residue asparagine 123. Positions 127, 175, 260, and 272 each coordinate L-citrulline.

Belongs to the argininosuccinate synthase family. Type 1 subfamily. Homotetramer.

It localises to the cytoplasm. The catalysed reaction is L-citrulline + L-aspartate + ATP = 2-(N(omega)-L-arginino)succinate + AMP + diphosphate + H(+). Its pathway is amino-acid biosynthesis; L-arginine biosynthesis; L-arginine from L-ornithine and carbamoyl phosphate: step 2/3. The polypeptide is Argininosuccinate synthase (Mycolicibacterium smegmatis (strain ATCC 700084 / mc(2)155) (Mycobacterium smegmatis)).